We begin with the raw amino-acid sequence, 486 residues long: Glutamyl-tRNA(Gln) amidotransferase subunit A (486 aa).

Active-site charge relay system residues include K74 and S149. Catalysis depends on S173, which acts as the Acyl-ester intermediate.

The protein belongs to the amidase family. GatA subfamily. In terms of assembly, heterotrimer of A, B and C subunits.

It carries out the reaction L-glutamyl-tRNA(Gln) + L-glutamine + ATP + H2O = L-glutaminyl-tRNA(Gln) + L-glutamate + ADP + phosphate + H(+). Its function is as follows. Allows the formation of correctly charged Gln-tRNA(Gln) through the transamidation of misacylated Glu-tRNA(Gln) in organisms which lack glutaminyl-tRNA synthetase. The reaction takes place in the presence of glutamine and ATP through an activated gamma-phospho-Glu-tRNA(Gln). This is Glutamyl-tRNA(Gln) amidotransferase subunit A from Prochlorococcus marinus (strain MIT 9313).